The following is an 85-amino-acid chain: Beta-defensin 18 (85 aa).

A signal peptide spans 1-23 (MQSTMKMFGIILMVIFSVSCGPS). Cystine bridges form between Cys-39/Cys-65, Cys-46/Cys-60, and Cys-50/Cys-66.

Belongs to the beta-defensin family.

It is found in the secreted. Functionally, has antibacterial activity. The sequence is that of Beta-defensin 18 (Defb18) from Mus musculus (Mouse).